Reading from the N-terminus, the 834-residue chain is RNA-binding protein 12B-B (834 aa).

The 76-residue stretch at 154 to 229 (PYLFLRGLPY…RFIEVMQGSE (76 aa)) folds into the RRM 1 domain. Residues 237 to 277 (GTATEGGDTPRMRSEEHSPSRRINGRHFRKRSHSKSPRARS) are disordered. Positions 244-255 (DTPRMRSEEHSP) are enriched in basic and acidic residues. The segment covering 259-277 (INGRHFRKRSHSKSPRARS) has biased composition (basic residues). RRM domains follow at residues 283 to 359 (FYVH…PVSR) and 401 to 478 (LCIY…LISE). Disordered regions lie at residues 546 to 572 (GYFR…PWEE) and 621 to 643 (HFRR…RSRE). Positions 550–572 (QSDRCSPEDFRHSPEDYRHPWEE) are enriched in basic and acidic residues. Serine 701 carries the phosphoserine modification. The region spanning 758–834 (IRVMISNLPF…GPRKVKLSLL (77 aa)) is the RRM 4 domain.

In Mus musculus (Mouse), this protein is RNA-binding protein 12B-B (Rbm12b2).